Here is a 272-residue protein sequence, read N- to C-terminus: Cell wall synthesis protein Wag31 (272 aa).

Disordered stretches follow at residues 1-22 (MPLT…GKRG) and 62-109 (AARS…SEDT). Positions 30–67 (AFLDLVENELTRLIEENADLRQRVAELDQELAAARSGA) form a coiled coil. 2 stretches are compositionally biased toward low complexity: residues 62 to 76 (AARS…ATSS) and 94 to 105 (VYEAPAQPAAPQ). Thr-74 carries the phosphothreonine modification. A coiled-coil region spans residues 139-206 (LSDARAQAEA…AERKHSEIMG (68 aa)). The disordered stretch occupies residues 243 to 272 (ELGQRGSAAPVDSSANSDASGFGQFNRGNN).

This sequence belongs to the DivIVA family. Forms homooligomers. Interacts with PbpB and CwsA. In terms of processing, phosphorylated by PknA.

It is found in the cytoplasm. Important for maintaining cell shape and cell wall integrity by localizing peptidoglycan synthesis to the cell poles. Protects PbpB (PBP3, FtsI) from oxidative stress-induced cleavage. This Mycolicibacterium smegmatis (strain ATCC 700084 / mc(2)155) (Mycobacterium smegmatis) protein is Cell wall synthesis protein Wag31 (wag31).